The following is a 412-amino-acid chain: Propionate kinase (412 aa).

The protein belongs to the acetokinase family. PduW subfamily.

The protein resides in the cytoplasm. The enzyme catalyses propanoate + ATP = propanoyl phosphate + ADP. The protein operates within polyol metabolism; 1,2-propanediol degradation. In terms of biological role, works with phosphate acetyltransferase (pta) to capture exogenous propionate and regenerate propionyl-CoA during degradation of 1,2-propanediol (1,2-PD). The sequence is that of Propionate kinase from Yersinia enterocolitica serotype O:8 / biotype 1B (strain NCTC 13174 / 8081).